Reading from the N-terminus, the 594-residue chain is Glutamate decarboxylase 1 (594 aa).

Over residues 1 to 13 (MASSTPSSSATSS) the composition is skewed to low complexity. The disordered stretch occupies residues 1–23 (MASSTPSSSATSSNAGADPNTTN). Ser-78 is subject to Phosphoserine. 190–192 (QLS) provides a ligand contact to 4-aminobutanoate. Lys-405 bears the N6-(pyridoxal phosphate)lysine mark. Arg-567 is a 4-aminobutanoate binding site.

This sequence belongs to the group II decarboxylase family. In terms of assembly, homodimer. Requires pyridoxal 5'-phosphate as cofactor.

It carries out the reaction L-glutamate + H(+) = 4-aminobutanoate + CO2. Its function is as follows. Catalyzes the synthesis of the inhibitory neurotransmitter gamma-aminobutyric acid (GABA) with pyridoxal 5'-phosphate as cofactor. The sequence is that of Glutamate decarboxylase 1 (GAD1) from Pongo abelii (Sumatran orangutan).